A 4981-amino-acid chain; its full sequence is Protocadherin Fat 4 (4981 aa).

An N-terminal signal peptide occupies residues 1–42 (MNLAANRAPGRRRLPLPSPSLCQLLRVWGLLSLLPGSARVQA). At 43–4505 (AEQRQVFQVM…PDEISLPLWA (4463 aa)) the chain is on the extracellular side. Cadherin domains are found at residues 44-135 (EQRQ…APVF), 136-250 (PDPS…PPVF), 251-353 (GSSH…DPVV), 359-475 (PATS…PPVF), 476-582 (EQQV…KPVF), 584-689 (QPEG…SPVF), 690-793 (YPVQ…PPVF), 794-893 (SQAA…APHF), 894-996 (LQAV…PPVF), 997-1100 (DQIS…RPLF), 1101-1210 (NSTN…APKF), 1211-1315 (LKDF…TPSF), 1316-1420 (PKST…PPSF), 1421-1529 (PPGD…VPMF), 1529-1629 (FISQ…GPVF), 1630-1740 (TQTK…PPVF), 1741-1841 (PTDT…TPRF), 1842-1944 (SRPV…PPVF), 1945-2051 (SMSS…PPMF), 2051-2154 (FLSP…NPVF), 2155-2259 (AQAM…VPVF), 2260-2364 (ELSP…VPTF), 2365-2468 (ANNM…PPRF), 2469-2569 (QHHP…FPKV), 2570-2671 (RAKE…APTF), 2672-2775 (EEDP…APRF), 2775-2874 (FSQI…TPRF), 2875-2985 (SRPS…PPQF), 2986-3091 (LQNK…TPEF), 3092-3196 (SQNH…SPVF), 3197-3300 (VPDE…VPRF), 3301-3406 (VSKL…PPVF), 3407-3512 (SLST…GPVL), and 3511-3622 (VLTV…VEIF). Residues Asn84 and Asn237 are each glycosylated (N-linked (GlcNAc...) asparagine). N-linked (GlcNAc...) asparagine glycosylation is found at Asn393, Asn416, Asn435, Asn483, Asn551, Asn615, Asn676, Asn721, Asn825, Asn880, Asn948, Asn1085, Asn1101, Asn1104, Asn1225, Asn1296, Asn1389, and Asn1514. Residues Asn1828, Asn1899, Asn1967, and Asn2119 are each glycosylated (N-linked (GlcNAc...) asparagine). Asn2387 and Asn2432 each carry an N-linked (GlcNAc...) asparagine glycan. Asn2923, Asn2939, Asn3038, Asn3142, Asn3219, Asn3394, and Asn3479 each carry an N-linked (GlcNAc...) asparagine glycan. 2 N-linked (GlcNAc...) asparagine glycosylation sites follow: Asn3708 and Asn3760. The 59-residue stretch at 3804 to 3862 (DHDPCIHGPCQNGGSCLRRLAVGSALKIQESLPVIIVANEPLQPSQCKCVPGYAGSWCE) folds into the EGF-like 1 domain. Cystine bridges form between Cys3808–Cys3819, Cys3813–Cys3850, Cys3852–Cys3861, Cys3868–Cys3879, Cys3873–Cys3888, Cys3890–Cys3899, Cys3906–Cys3917, Cys3911–Cys3926, Cys3928–Cys3937, Cys3944–Cys3955, Cys3949–Cys3964, and Cys3966–Cys3975. The EGF-like 2; calcium-binding domain maps to 3864 to 3900 (DIDECLPAPCHNGGTCHNLVGGFSCSCPEGFTGRACE). Residues 3902–3938 (DINECLPSPCKHGAVCQNFPGGFNCVCKTGYTGKMCE) form the EGF-like 3; calcium-binding domain. One can recognise an EGF-like 4 domain in the interval 3940–3976 (SVNYCECNPCFNGGSCQSGVESYYCHCPFGVFGKHCE). In terms of domain architecture, Laminin G-like 1 spans 3977-4161 (LNSYGFEELS…LAAQGILDQC (185 aa)). The N-linked (GlcNAc...) asparagine glycan is linked to Asn4019. 4 disulfides stabilise this stretch: Cys4135–Cys4161, Cys4168–Cys4179, Cys4173–Cys4188, and Cys4190–Cys4199. The 37-residue stretch at 4164–4200 (LEGTCARNPCQHGGTCVDFWSWQQCQCMEGLTGKYCE) folds into the EGF-like 5 domain. Positions 4219–4399 (YHMSQSEKRE…KTDPSVKIGC (181 aa)) constitute a Laminin G-like 2 domain. Residues Asn4269 and Asn4314 are each glycosylated (N-linked (GlcNAc...) asparagine). Cystine bridges form between Cys4366/Cys4399, Cys4431/Cys4442, Cys4436/Cys4452, and Cys4454/Cys4463. The EGF-like 6 domain occupies 4427–4464 (PPGDCASHPCQNGGSCEPGLLSGYTCSCPESHTGRTCE). The helical transmembrane segment at 4506–4526 (VPAIVGSCATALALLVLSLIL) threads the bilayer. Over 4527-4981 (CNQCRGKMPK…AKDGEAEQYV (455 aa)) the chain is Cytoplasmic. Disordered stretches follow at residues 4535-4585 (PKNP…PDII), 4677-4713 (PSSY…KPSA), 4753-4773 (RRSK…SRLK), 4796-4911 (RLNT…PAAA), and 4957-4981 (AAGN…EQYV). Over residues 4677–4701 (PSSYGQGLRTSSLSHSACPTPNPLS) the composition is skewed to polar residues. The segment at 4708-4797 (FSKPSAFYRN…GLSIEEVERL (90 aa)) is necessary and sufficient for interaction with MPDZ. The segment covering 4811–4823 (DHGRSSSEEDCRR) has biased composition (basic and acidic residues). Ser4878 carries the phosphoserine modification. Residues 4971–4981 (AAKDGEAEQYV) are compositionally biased toward basic and acidic residues.

Heterophilic interaction with DCHS1; this interaction affects their respective protein levels. Interacts (via cytoplasmic domain) with MPDZ. Forms a complex with PALS1 and MPDZ. As to expression, widely expressed.

It is found in the membrane. Cadherins are cell-cell interaction molecules. FAT4 plays a role in the maintenance of planar cell polarity as well as in inhibition of YAP1-mediated neuroprogenitor cell proliferation and differentiation. The protein is Protocadherin Fat 4 (Fat4) of Mus musculus (Mouse).